Consider the following 335-residue polypeptide: Peroxidase 53 (335 aa).

The first 30 residues, 1 to 30 (MAVTNLPTCDGLFIISLIVIVSSIFGTSSA), serve as a signal peptide directing secretion. Position 31 is a pyrrolidone carboxylic acid (glutamine 31). N-linked (GlcNAc...) asparagine glycosylation is found at asparagine 33 and asparagine 43. Cystine bridges form between cysteine 41–cysteine 121, cysteine 74–cysteine 79, cysteine 127–cysteine 329, and cysteine 206–cysteine 238. Residue histidine 72 is the Proton acceptor of the active site. 5 residues coordinate Ca(2+): aspartate 73, valine 76, glycine 78, aspartate 80, and serine 82. A glycan (N-linked (GlcNAc...) asparagine) is linked at asparagine 165. Proline 169 is a binding site for substrate. Asparagine 177 carries an N-linked (GlcNAc...) asparagine glycan. Position 199 (histidine 199) interacts with heme b. Threonine 200 serves as a coordination point for Ca(2+). N-linked (GlcNAc...) asparagine glycans are attached at residues asparagine 215, asparagine 227, and asparagine 241. Ca(2+) is bound by residues aspartate 251, threonine 254, and aspartate 259. An N-linked (GlcNAc...) asparagine glycan is attached at asparagine 297.

This sequence belongs to the peroxidase family. Classical plant (class III) peroxidase subfamily. Ca(2+) serves as cofactor. The cofactor is heme b. Mainly expressed in roots.

The protein resides in the secreted. It carries out the reaction 2 a phenolic donor + H2O2 = 2 a phenolic radical donor + 2 H2O. In terms of biological role, removal of H(2)O(2), oxidation of toxic reductants, biosynthesis and degradation of lignin, suberization, auxin catabolism, response to environmental stresses such as wounding, pathogen attack and oxidative stress. These functions might be dependent on each isozyme/isoform in each plant tissue. Closely linked to lignin formation by showing monolignol substrate specificity. The polypeptide is Peroxidase 53 (PER53) (Arabidopsis thaliana (Mouse-ear cress)).